The sequence spans 1250 residues: Protein SSD1 (1250 aa).

The segment covering 1–22 has biased composition (polar residues); it reads MSKNSNVNNNRSQEPNNMFVQT. The interval 1–32 is disordered; sequence MSKNSNVNNNRSQEPNNMFVQTTGGGKNAPKQ. At S2 the chain carries N-acetylserine. The residue at position 40 (S40) is a Phosphoserine. Residues 79-163 are disordered; it reads TGQYLSGNSG…SSIYGHSRRH (85 aa). The span at 84 to 94 shows a compositional bias: polar residues; it reads SGNSGSNNHFT. Residues 124 to 145 show a composition bias toward low complexity; it reads NNSGYYHNSYDNNNNSNNPGSN. Residues S164 and S183 each carry the phosphoserine modification. Over residues 197 to 208 the composition is skewed to polar residues; that stretch reads QADSGSNSTTEQ. Disordered stretches follow at residues 197–338, 418–443, and 455–517; these read QADS…GGRK, KEKE…SSDD, and SNNF…DDVE. A Phosphothreonine modification is found at T227. The segment covering 264–276 has biased composition (polar residues); the sequence is NEYSPGINSNWRN. Residues 277-287 are compositionally biased toward low complexity; the sequence is QSQQPQQQLSP. 2 positions are modified to phosphoserine: S286 and S322. A compositionally biased stretch (polar residues) spans 319 to 329; it reads SNSSVHSFSSQ. Polar residues predominate over residues 481–495; sequence STINNDSDSLSSPTK. 2 positions are modified to phosphoserine: S491 and S492. The span at 497–510 shows a compositional bias: basic residues; sequence GVRRRSSLKQRPTQ. The region spanning 582 to 657 is the CSD2 domain; it reads AWFKPTDKKV…EIDSILRDNN (76 aa). A Phosphotyrosine modification is found at Y688. Positions 694-1015 constitute an RNB domain; it reads DTNEYNIFAI…VHRQLKAVIH (322 aa). The region spanning 1064–1148 is the DIS3L2 C-terminal domain; the sequence is GQLLTMATVL…SIKNKFRSTA (85 aa).

It belongs to the RNR ribonuclease family.

In terms of biological role, can suppress the lethality due to deletion of SIT4, and partially the defects due to BCY1 disruption. Is implicated in the control of the cell cycle G1 phase. The chain is Protein SSD1 (SSD1) from Saccharomyces cerevisiae (strain ATCC 204508 / S288c) (Baker's yeast).